We begin with the raw amino-acid sequence, 99 residues long: YcgL domain-containing protein HD_1373 (99 aa).

One can recognise a YcgL domain in the interval 8 to 92 (NFCAIYKSMS…PAENLLKQFL (85 aa)).

The sequence is that of YcgL domain-containing protein HD_1373 from Haemophilus ducreyi (strain 35000HP / ATCC 700724).